Reading from the N-terminus, the 372-residue chain is 1,3,6,8-tetrahydroxynaphthalene synthase (372 aa).

The active site involves C138.

It belongs to the thiolase-like superfamily. Chalcone/stilbene synthases family. In terms of assembly, homodimer.

The catalysed reaction is 5 malonyl-CoA + 5 H(+) = naphthalene-1,3,6,8-tetrol + 5 CO2 + 5 CoA + H2O. It functions in the pathway pigment biosynthesis; melanin biosynthesis. In terms of biological role, involved in the biosynthesis of melanin but also various secondary metabolites containing a naphthoquinone ring. Catalyzes the iterative condensation of five CoA-linked malonyl units to form a pentaketide intermediate. THNS subsequently catalyzes the dual intramolecular Claisen and aldol condensations of this linear intermediate to produce the fused ring of 1,3,6,8-tetrahydroxynaphthalene (THN). In Streptomyces griseus, this protein is 1,3,6,8-tetrahydroxynaphthalene synthase.